A 506-amino-acid chain; its full sequence is Dipeptide and tripeptide permease A (506 aa).

At Met-1–Arg-36 the chain is on the cytoplasmic side. Residues Phe-37 to Ser-57 form a helical membrane-spanning segment. Residues Glu-58–Ser-61 are Periplasmic-facing. A helical membrane pass occupies residues Ile-62–Leu-82. The Cytoplasmic segment spans residues Gly-83–Arg-91. 2 helical membrane-spanning segments follow: residues Val-92–His-112 and Glu-113–Ala-133. Topologically, residues Asn-134–Thr-155 are cytoplasmic. A helical transmembrane segment spans residues Met-156–Ala-176. At Ala-177–Gly-180 the chain is on the periplasmic side. Residues Trp-181–Val-201 form a helical membrane-spanning segment. At Cys-202–Lys-222 the chain is on the cytoplasmic side. A helical transmembrane segment spans residues Leu-223–Asn-243. The Periplasmic portion of the chain corresponds to Gln-244 to Arg-248. A helical transmembrane segment spans residues Trp-249 to Leu-269. The Cytoplasmic portion of the chain corresponds to His-270–Lys-276. The helical transmembrane segment at Met-277–Met-297 threads the bilayer. Residues Pro-298–Gln-322 lie on the Periplasmic side of the membrane. A helical membrane pass occupies residues Tyr-323–Asn-343. Over Lys-344–Lys-354 the chain is Cytoplasmic. Residues Phe-355 to Phe-375 form a helical membrane-spanning segment. Residues Ala-376 to Asn-385 lie on the Periplasmic side of the membrane. A helical transmembrane segment spans residues Trp-386 to Leu-406. The Cytoplasmic segment spans residues Ala-407–Arg-416. Residues Leu-417–Gly-437 form a helical membrane-spanning segment. Residues Lys-438–His-461 are Periplasmic-facing. The helical transmembrane segment at Val-462–Pro-482 threads the bilayer. Over Lys-483–Asn-506 the chain is Cytoplasmic.

The protein belongs to the major facilitator superfamily. Proton-dependent oligopeptide transporter (POT/PTR) (TC 2.A.17) family. DtpA subfamily.

The protein resides in the cell inner membrane. Proton-dependent permease that transports di- and tripeptides. The polypeptide is Dipeptide and tripeptide permease A (Serratia proteamaculans (strain 568)).